A 249-amino-acid polypeptide reads, in one-letter code: MAADESPASPSELSECFSAEDYAAESLAADLDPWITFDARKTPRAEFSSWLQSHRPSSVSRYGDGEAGAGPVGWIAVRGPDYSEQSGDVEGLQDSWETLLTSGRSVSFQNIRELALNHSVLDGKWLMHLDTGFKVDRAWESIARATVLEGKIWSAKVSPRDPSSNSRHVICVYNQNFTDEEQVVRLDSAIRAAGVKCVLYYKPDVYTYLGIYRNNRWKLCPTIYESMFDLESVPRRSHILNKVTNLELS.

This sequence belongs to the UPF0696 family.

The chain is UPF0696 protein C11orf68 homolog from Danio rerio (Zebrafish).